Consider the following 223-residue polypeptide: Glucosyl-3-phosphoglycerate phosphatase (223 aa).

Arg-10 serves as a coordination point for substrate. Residue His-11 is the Tele-phosphohistidine intermediate of the active site. An Isoglutamyl lysine isopeptide (Lys-Gln) (interchain with Q-Cter in protein Pup) cross-link involves residue Lys-47. Arg-60 provides a ligand contact to substrate. The active-site Proton donor/acceptor is Glu-84. Residue His-159 coordinates substrate.

This sequence belongs to the phosphoglycerate mutase family. In terms of assembly, homodimer. Dimerization of the enzyme is essential for its dephosphorylation activity.

It catalyses the reaction (2R)-2-O-(alpha-D-glucopyranosyl)-3-phospho-glycerate + H2O = (2R)-2-O-(alpha-D-glucopyranosyl)-glycerate + phosphate. It carries out the reaction 2-O-(alpha-D-mannosyl)-3-phosphoglycerate + H2O = (2R)-2-O-(alpha-D-mannosyl)-glycerate + phosphate. The catalysed reaction is (2R)-2-O-[alpha-D-mannopyranosyl-(1-&gt;2)-alpha-D-glucopyranosyl]-3-phospho-glycerate + H2O = (2R)-2-O-[alpha-D-mannopyranosyl-(1-&gt;2)-alpha-D-glucopyranosyl]-glycerate + phosphate. Progressively inhibited by cobalt ions at concentrations between 10-50 mM and by copper ions at any concentration between 1-50 mM. In terms of biological role, involved in the biosynthesis of mycobacterial methylglucose lipopolysaccharides (MGLPs). Catalyzes the dephosphorylation of glucosyl-3-phosphoglycerate (GPG) to glucosylglycerate (GG). GPG is the preferred substrate, but GpgP also exhibits low dephosphorylation activity on mannosyl-3-phosphoglycerate (MPG) and mannosylglucosyl-3-phosphoglycerate (MGPG) in vitro. Shows only trace of phosphoglycerate mutase (PGM) activity. The protein is Glucosyl-3-phosphoglycerate phosphatase of Mycobacterium tuberculosis (strain ATCC 25618 / H37Rv).